We begin with the raw amino-acid sequence, 320 residues long: MKIIFAGTPEFAATALAALLKTSHEIIAVYTQPDRKAGRGQKLTPSPVKQLALEHNIPVYQPLHFKASTEEGLAAQQELAALGADVMVVAAYGLILPQAVLDTPKYGCLNIHGSLLPRWRGAAPIQRAIATGDDETGITIMQMAAGLDTGDMMYKTYCPITSEDTSATLHDKLAAQGATAICAVLESEETLQKYLAEREVQDESLTVYAHKLVKSEARIDWSMNAVQVDRNIRAFNPWPVAFIQLDENNALRVWNSTISSQSKVNAQAGEIIAIDKQGVHVACGENTFICLTSVQWPGGKALNAQQIAQTQKLHVGQILP.

A (6S)-5,6,7,8-tetrahydrofolate-binding site is contributed by 114–117; it reads SLLP.

It belongs to the Fmt family.

The enzyme catalyses L-methionyl-tRNA(fMet) + (6R)-10-formyltetrahydrofolate = N-formyl-L-methionyl-tRNA(fMet) + (6S)-5,6,7,8-tetrahydrofolate + H(+). In terms of biological role, attaches a formyl group to the free amino group of methionyl-tRNA(fMet). The formyl group appears to play a dual role in the initiator identity of N-formylmethionyl-tRNA by promoting its recognition by IF2 and preventing the misappropriation of this tRNA by the elongation apparatus. In Acinetobacter baumannii (strain AB307-0294), this protein is Methionyl-tRNA formyltransferase.